The primary structure comprises 296 residues: 4-diphosphocytidyl-2-C-methyl-D-erythritol kinase (296 aa).

Lys14 is a catalytic residue. 97–107 provides a ligand contact to ATP; the sequence is PMGAGMGGGSS. Asp139 is a catalytic residue.

Belongs to the GHMP kinase family. IspE subfamily.

The catalysed reaction is 4-CDP-2-C-methyl-D-erythritol + ATP = 4-CDP-2-C-methyl-D-erythritol 2-phosphate + ADP + H(+). Its pathway is isoprenoid biosynthesis; isopentenyl diphosphate biosynthesis via DXP pathway; isopentenyl diphosphate from 1-deoxy-D-xylulose 5-phosphate: step 3/6. Functionally, catalyzes the phosphorylation of the position 2 hydroxy group of 4-diphosphocytidyl-2C-methyl-D-erythritol. The chain is 4-diphosphocytidyl-2-C-methyl-D-erythritol kinase from Polynucleobacter necessarius subsp. necessarius (strain STIR1).